We begin with the raw amino-acid sequence, 173 residues long: Mitochondrial import inner membrane translocase subunit TIM22-1 (173 aa).

The N-terminal 18 residues, 1-18 (MADSSAAEPTTGASSPPV), are a transit peptide targeting the mitochondrion. A disordered region spans residues 1-26 (MADSSAAEPTTGASSPPVASDENSTQ). 4 helical membrane-spanning segments follow: residues 52–72 (VTSGVMGGGLGLMMGLFLGAL), 101–119 (SCKTFAVMGLVFSAAECIV), 128–144 (TVNTAIAGCVTGGSMSA), and 151–168 (ACIGCAGFATFSVLIEKF).

It belongs to the Tim17/Tim22/Tim23 family. Expressed in young cotyledons, roots, flowers and leaves.

It is found in the mitochondrion inner membrane. Its function is as follows. Essential core component of the TIM22 complex, a complex that mediates the import and insertion of multi-pass transmembrane proteins into the mitochondrial inner membrane. This Arabidopsis thaliana (Mouse-ear cress) protein is Mitochondrial import inner membrane translocase subunit TIM22-1 (TIM22-1).